Reading from the N-terminus, the 96-residue chain is Exopolysaccharide production repressor protein (96 aa).

Transmembrane regions (helical) follow at residues 6 to 26 and 35 to 55; these read FVVS…FLTG and TLLC…FLVW. Positions 64–96 are disordered; the sequence is LSPGQLPADPTNDEKQTGKLSLRRLNRPPHFNS.

Its subcellular location is the cell membrane. Its pathway is glycan metabolism; exopolysaccharide biosynthesis. Inhibition of exopolysaccharide synthesis (EPS) and nodulation ability (NOD). This is Exopolysaccharide production repressor protein (exoX) from Sinorhizobium fredii (strain NBRC 101917 / NGR234).